The chain runs to 315 residues: Protein translocase subunit SecF (315 aa).

Transmembrane regions (helical) follow at residues 12 to 32, 136 to 156, 166 to 186, 188 to 208, 247 to 267, and 271 to 291; these read AWIV…ISWA, ALFR…IIYL, VFAI…FAIF, LVGG…IIGF, SINT…FGGD, and FFAL…IFMA.

This sequence belongs to the SecD/SecF family. SecF subfamily. As to quaternary structure, forms a complex with SecD. Part of the essential Sec protein translocation apparatus which comprises SecA, SecYEG and auxiliary proteins SecDF. Other proteins may also be involved.

Its subcellular location is the cell inner membrane. Its function is as follows. Part of the Sec protein translocase complex. Interacts with the SecYEG preprotein conducting channel. SecDF uses the proton motive force (PMF) to complete protein translocation after the ATP-dependent function of SecA. Probably participates in protein translocation into and across both the cytoplasmic and thylakoid membranes in cyanobacterial cells. The sequence is that of Protein translocase subunit SecF from Synechocystis sp. (strain ATCC 27184 / PCC 6803 / Kazusa).